Here is a 306-residue protein sequence, read N- to C-terminus: NAD-dependent protein deacylase (306 aa).

Residues 1–305 form the Deacetylase sirtuin-type domain; that stretch reads MNKQLKEFQE…PIALKPLIGD (305 aa). NAD(+) is bound at residue 23-42; that stretch reads GAGLSASSGLPTFRGSQGLW. Residues Tyr67 and Arg70 each contribute to the substrate site. 103–106 provides a ligand contact to NAD(+); that stretch reads QNVD. Residue His123 is the Proton acceptor of the active site. Positions 131, 136, 200, and 203 each coordinate Zn(2+). NAD(+) contacts are provided by residues 243–245, 269–271, and Ala291; these read GTS and NTD.

It belongs to the sirtuin family. Class III subfamily. Requires Zn(2+) as cofactor.

Its subcellular location is the mitochondrion. The catalysed reaction is N(6)-malonyl-L-lysyl-[protein] + NAD(+) + H2O = 2''-O-malonyl-ADP-D-ribose + nicotinamide + L-lysyl-[protein]. It carries out the reaction N(6)-succinyl-L-lysyl-[protein] + NAD(+) + H2O = 2''-O-succinyl-ADP-D-ribose + nicotinamide + L-lysyl-[protein]. It catalyses the reaction N(6)-glutaryl-L-lysyl-[protein] + NAD(+) + H2O = 2''-O-glutaryl-ADP-D-ribose + nicotinamide + L-lysyl-[protein]. Its function is as follows. NAD-dependent lysine demalonylase, desuccinylase and deglutarylase that specifically removes malonyl, succinyl and glutaryl groups on target proteins. Has weak NAD-dependent protein deacetylase activity; however this activity may not be physiologically relevant in vivo. The sequence is that of NAD-dependent protein deacylase from Candida albicans (strain SC5314 / ATCC MYA-2876) (Yeast).